The primary structure comprises 650 residues: Vitrin (650 aa).

A signal peptide spans 1-26 (MGIVVPTMKASVIEVLLVLLVTGIHS). The region spanning 40 to 133 (TVPQINCDVK…LSLPRWRESF (94 aa)) is the LCCL domain. Disulfide bonds link Cys46-Cys62 and Cys66-Cys86. The segment at 198-226 (RSTSKPFAASVTNSPRPQPVGHRSQEMEE) is disordered. VWFA domains are found at residues 265–450 (DLSF…VKRV) and 467–640 (DIGF…IQNI). Asn492 is a glycosylation site (N-linked (GlcNAc...) asparagine).

Binds dermatan sulfate and chondroitin sulfate.

It localises to the secreted. Its subcellular location is the extracellular space. It is found in the extracellular matrix. In terms of biological role, promotes matrix assembly and cell adhesiveness. Plays a role in spinal cord formation by regulating the proliferation and differentiation of neural stem cells. In Mus musculus (Mouse), this protein is Vitrin (Vit).